Consider the following 203-residue polypeptide: MLNFFLITIQFLSGAVMYSHIIAKIKGIDLRKIRDGNPGSSNLWRAAGWKYGFPALMLDYFKGTFPIAFFVWNESFHVNRYVIAFAALSGILGHAFSPFLKFKGGKAIATTFGAWSVLTKWEGPMVLGTVFTIFSILHRLRGKNKTTPEEDAFRVMIGFAALLIYTMWKVFNGMPELAILYFGNFLIVFYKHRLELRRYLKGV.

Helical transmembrane passes span 2–22, 52–72, 82–102, 117–137, 150–168, and 170–190; these read LNFFLITIQFLSGAVMYSHII, GFPALMLDYFKGTFPIAFFVW, VIAFAALSGILGHAFSPFLKF, VLTKWEGPMVLGTVFTIFSIL, EDAFRVMIGFAALLIYTMW, and VFNGMPELAILYFGNFLIVFY.

This sequence belongs to the PlsY family. In terms of assembly, probably interacts with PlsX.

It is found in the cell inner membrane. It carries out the reaction an acyl phosphate + sn-glycerol 3-phosphate = a 1-acyl-sn-glycero-3-phosphate + phosphate. It functions in the pathway lipid metabolism; phospholipid metabolism. Catalyzes the transfer of an acyl group from acyl-phosphate (acyl-PO(4)) to glycerol-3-phosphate (G3P) to form lysophosphatidic acid (LPA). This enzyme utilizes acyl-phosphate as fatty acyl donor, but not acyl-CoA or acyl-ACP. The sequence is that of Glycerol-3-phosphate acyltransferase 1 from Thermotoga maritima (strain ATCC 43589 / DSM 3109 / JCM 10099 / NBRC 100826 / MSB8).